Consider the following 1761-residue polypeptide: Probable serine/threonine-protein kinase DDB_G0282963 (1761 aa).

Disordered regions lie at residues 18-47 (PQQQ…QQQQ), 60-269 (QQQQ…SNKL), 322-458 (SISN…SDFN), 545-717 (QNSS…KSSQ), 749-783 (LKNS…TISQ), 798-830 (AFYN…STSA), 842-956 (TTQI…KSVF), 972-997 (NSHH…EVPT), 1081-1151 (ITSA…CNVN), 1179-1305 (KNNC…PSKQ), 1318-1343 (ALDS…GTPT), and 1355-1459 (QHSR…ECWK). Low complexity-rich tracts occupy residues 19-47 (QQQQ…QQQQ), 60-85 (QQQQ…SNEI), 92-105 (NITN…IISL), and 112-237 (ALNS…NNNN). Residues 238–256 (KQMTPPTFKNNLQVKHQPQ) show a composition bias toward polar residues. 4 stretches are compositionally biased toward low complexity: residues 257–269 (SSSG…SNKL), 322–341 (SISN…TNTT), 348–451 (GSIG…NNGV), and 546–572 (NSSL…NNNI). Over residues 573 to 582 (MAGSTSSVIY) the composition is skewed to polar residues. A compositionally biased stretch (low complexity) spans 591 to 627 (NENNNNNINNDNTVCNINNNNNSNNNKSNNSNNSNNS). Over residues 633 to 643 (SSDEEPETDSD) the composition is skewed to acidic residues. 8 stretches are compositionally biased toward low complexity: residues 674 to 697 (NNTN…NNNT), 759 to 778 (PILS…NNSN), 805 to 824 (NNNN…NNNN), 847 to 885 (TSDI…YNNY), 902 to 956 (TKMS…KSVF), 979 to 990 (SGNNSSNSNNNN), 1081 to 1149 (ITSA…CTCN), and 1180 to 1262 (NNCT…SNNN). Residues 1263–1273 (NHHHHHHHHHN) show a composition bias toward basic residues. Composition is skewed to low complexity over residues 1288–1303 (SSSS…SSPS), 1320–1338 (DSTN…TSSN), 1359–1386 (NNSS…NNNN), and 1393–1454 (SNST…MNSN). Residues 1476–1744 (LFLIKKIGAG…AITSLYDDYI (269 aa)) form the Protein kinase domain. ATP contacts are provided by residues 1482-1490 (IGAGSFSKV) and Lys-1503. Asp-1597 serves as the catalytic Proton acceptor.

The protein belongs to the protein kinase superfamily. TKL Ser/Thr protein kinase family.

It carries out the reaction L-seryl-[protein] + ATP = O-phospho-L-seryl-[protein] + ADP + H(+). It catalyses the reaction L-threonyl-[protein] + ATP = O-phospho-L-threonyl-[protein] + ADP + H(+). This chain is Probable serine/threonine-protein kinase DDB_G0282963, found in Dictyostelium discoideum (Social amoeba).